An 89-amino-acid polypeptide reads, in one-letter code: Small ribosomal subunit protein uS15 (89 aa).

This sequence belongs to the universal ribosomal protein uS15 family. In terms of assembly, part of the 30S ribosomal subunit. Forms a bridge to the 50S subunit in the 70S ribosome, contacting the 23S rRNA.

Its function is as follows. One of the primary rRNA binding proteins, it binds directly to 16S rRNA where it helps nucleate assembly of the platform of the 30S subunit by binding and bridging several RNA helices of the 16S rRNA. Forms an intersubunit bridge (bridge B4) with the 23S rRNA of the 50S subunit in the ribosome. The protein is Small ribosomal subunit protein uS15 of Streptococcus pneumoniae (strain P1031).